Consider the following 183-residue polypeptide: Non-classical export protein 2 homolog (183 aa).

Residues 1–8 (MVGIRQYG) lie on the Cytoplasmic side of the membrane. The helical transmembrane segment at 9-29 (VFTWVFRTFQLAIDTIVLALA) threads the bilayer. Topologically, residues 30–44 (SALVNQQTSGGSPGK) are extracellular. Residues 45–65 (INFSVAVGSFAILTFFLTAVG) form a helical membrane-spanning segment. Over 66–75 (RFLPTILGNP) the chain is Cytoplasmic. A helical transmembrane segment spans residues 76-96 (WLIAFYDFVNWVFALTGGCCI). Residues 97–131 (AVAIRVHACDNQKYLDRNHYTQGSMRRCQELKALC) lie on the Extracellular side of the membrane. Residues 132–152 (FFLWFMFGLYVASFIVQIFIA) form a helical membrane-spanning segment. At 153–183 (KNDTPNYTFRGRGRGKGSGPAVAPRPVMSAV) the chain is on the cytoplasmic side. Residues 163–183 (GRGRGKGSGPAVAPRPVMSAV) form a disordered region.

Belongs to the NCE102 family.

It is found in the cytoplasm. The protein localises to the golgi apparatus membrane. Its subcellular location is the cell membrane. Its function is as follows. Involved in membrane organization and might act as a sensor of sphingolipids that regulates plasma membrane function. Involved in a novel pathway of export of proteins that lack a cleavable signal sequence. The polypeptide is Non-classical export protein 2 homolog (fhn1) (Schizosaccharomyces pombe (strain 972 / ATCC 24843) (Fission yeast)).